Here is a 367-residue protein sequence, read N- to C-terminus: Phosphoribosylaminoimidazole-succinocarboxamide synthase (367 aa).

It belongs to the SAICAR synthetase family.

The catalysed reaction is 5-amino-1-(5-phospho-D-ribosyl)imidazole-4-carboxylate + L-aspartate + ATP = (2S)-2-[5-amino-1-(5-phospho-beta-D-ribosyl)imidazole-4-carboxamido]succinate + ADP + phosphate + 2 H(+). The protein operates within purine metabolism; IMP biosynthesis via de novo pathway; 5-amino-1-(5-phospho-D-ribosyl)imidazole-4-carboxamide from 5-amino-1-(5-phospho-D-ribosyl)imidazole-4-carboxylate: step 1/2. This Shewanella oneidensis (strain ATCC 700550 / JCM 31522 / CIP 106686 / LMG 19005 / NCIMB 14063 / MR-1) protein is Phosphoribosylaminoimidazole-succinocarboxamide synthase.